The chain runs to 306 residues: Beta-lactamase 1 (306 aa).

An N-terminal signal peptide occupies residues 1-27 (MILKNKRMLKIGICVGILGLSITSLEA). Ser-91 serves as the catalytic Acyl-ester intermediate. Catalysis depends on Glu-187, which acts as the Proton acceptor. 253 to 255 (KSG) provides a ligand contact to substrate.

This sequence belongs to the class-A beta-lactamase family.

The enzyme catalyses a beta-lactam + H2O = a substituted beta-amino acid. Functionally, this protein is a beta-lactamase with a substrate specificity for penicillins. The sequence is that of Beta-lactamase 1 (blaY) from Bacillus cereus.